The chain runs to 481 residues: Protein hedgehog (481 aa).

The first 19 residues, 1 to 19 (MDNQAVSALWSCASATCLS), serve as a signal peptide directing secretion. Positions 20 to 90 (LDAKRHSIEP…LALNFRHAHS (71 aa)) are excised as a propeptide. The interval 26–56 (SIEPNPDGQASPDVNNNNNNHNKSTTTVDAH) is disordered. Cysteine 91 carries N-palmitoyl cysteine lipidation. Glutamate 155, glutamate 156, aspartate 161, threonine 191, glutamate 192, aspartate 195, and aspartate 197 together coordinate Ca(2+). A lipid anchor (Cholesterol glycine ester) is attached at glycine 264.

It belongs to the hedgehog family. As to quaternary structure, interacts with shf. In terms of processing, the C-terminal part of the hedgehog protein precursor displays an autoproteolysis activity that results in the cleavage of the full-length protein into two parts (N-product and C-product). In addition, the C-terminal part displays a cholesterol transferase activity that results by the covalent attachment of a cholesterol moiety to the C-terminal of the newly generated N-product. The N-product is the active species in both local and long-range signaling, whereas the C-product has no signaling activity. Post-translationally, cholesterylation is required for N-product targeting to lipid rafts and multimerization. N-palmitoylation by Rasp of the hedgehog N-product, within the secretory pathway, is required for the embryonic and larval patterning activities of the hedgehog signal.

Its subcellular location is the nucleus. It localises to the cytoplasm. The protein resides in the cell membrane. It carries out the reaction glycyl-L-cysteinyl-[protein] + cholesterol + H(+) = [protein]-C-terminal glycyl cholesterol ester + N-terminal L-cysteinyl-[protein]. The C-terminal part of the hedgehog protein precursor displays an autoproteolysis activity that results in the cleavage of the full-length protein into two parts (N-product and C-product). In addition, the C-terminal part displays a cholesterol transferase activity that results by the covalent attachment of a cholesterol moiety to the C-terminal of the newly generated N-product. Once cleaved, the C-product has no signaling activity and diffuses from the cell. Its function is as follows. The dually lipidated hedgehog protein N-product is a morphogen which is essential for a variety of patterning events during development. Establishes the anterior-posterior axis of the embryonic segments and patterns the larval imaginal disks. Binds to the patched (ptc) receptor, which functions in association with smoothened (smo), to activate the transcription of target genes wingless (wg), decapentaplegic (dpp) and ptc. In the absence of hh, ptc represses the constitutive signaling activity of smo through fused (fu). Essential component of a signaling pathway which regulates the Duox-dependent gut immune response to bacterial uracil; required to activate Cad99C-dependent endosome formation, norpA-dependent Ca2+ mobilization and p38 MAPK, which are essential steps in the Duox-dependent production of reactive oxygen species (ROS) in response to intestinal bacterial infection. During photoreceptor differentiation, it up-regulates transcription of Ubr3, which in turn promotes the hh-signaling pathway by mediating the ubiquitination and degradation of cos. The chain is Protein hedgehog from Drosophila hydei (Fruit fly).